A 79-amino-acid polypeptide reads, in one-letter code: Small ribosomal subunit protein bS16 (79 aa).

This sequence belongs to the bacterial ribosomal protein bS16 family.

This is Small ribosomal subunit protein bS16 from Solidesulfovibrio magneticus (strain ATCC 700980 / DSM 13731 / RS-1) (Desulfovibrio magneticus).